The chain runs to 285 residues: Probable endonuclease 4 (285 aa).

The Zn(2+) site is built by His-69, His-109, Glu-145, Asp-179, His-182, His-216, Asp-229, His-231, and Glu-261.

Belongs to the AP endonuclease 2 family. Zn(2+) serves as cofactor.

The enzyme catalyses Endonucleolytic cleavage to 5'-phosphooligonucleotide end-products.. In terms of biological role, endonuclease IV plays a role in DNA repair. It cleaves phosphodiester bonds at apurinic or apyrimidinic (AP) sites, generating a 3'-hydroxyl group and a 5'-terminal sugar phosphate. This Escherichia coli O1:K1 / APEC protein is Probable endonuclease 4.